The primary structure comprises 438 residues: Battenin (438 aa).

The tract at residues 1 to 27 is disordered; that stretch reads MGSSAGSWRRLEDSEREETDSEPQAPR. Residues 1–37 lie on the Cytoplasmic side of the membrane; sequence MGSSAGSWRRLEDSEREETDSEPQAPRLDSRSVLWKN. Serine 14 is modified (phosphoserine). A helical membrane pass occupies residues 38-58; it reads AVGFWILGLCNNFSYVVMLSA. Topologically, residues 59–127 are lumenal; that stretch reads AHDILKQEQA…GLHLLPYSPR (69 aa). The disordered stretch occupies residues 67–87; sequence QASGNQSHVEPGPTPTPHNSS. Residues asparagine 71 and asparagine 85 are each glycosylated (N-linked (GlcNAc...) asparagine). A helical membrane pass occupies residues 128–148; the sequence is VLVSGVCSAGSFVLVAFSQSV. Residues 149 to 151 lie on the Cytoplasmic side of the membrane; that stretch reads GLS. A helical transmembrane segment spans residues 152-172; the sequence is LCGVVLASISSGLGEVTFLSL. Topologically, residues 173–182 are lumenal; that stretch reads TAFYPSAVIS. The helical transmembrane segment at 183–203 threads the bilayer; the sequence is WWSSGTGGAGLLGSLSYLGLT. The Cytoplasmic portion of the chain corresponds to 204 to 277; it reads QAGLSPQHTL…DLSLQERWTV (74 aa). Residues 239-261 form a disordered region; that stretch reads PGGENEAETAARQPLIGTETPES. The Lysosomal targeting motif motif lies at 242 to 244; that stretch reads ENE. The short motif at 253 to 254 is the Lysosomal targeting motif. Required for AP1G1, AP2A2 and AP3D1 interaction element; it reads LI. Residues 278–298 traverse the membrane as a helical segment; the sequence is FKGLLWYIIPLVLVYFAEYFI. Residues 299 to 346 are Lumenal-facing; the sequence is NQGLFELLFFRNTSLSHAQQYRWYQMLYQAGVFASRSSLQCCRIRFTW. Asparagine 310 carries an N-linked (GlcNAc...) asparagine glycan. Residues 347–367 form a helical membrane-spanning segment; the sequence is VLALLQCLNLALLLADVCLNF. Residues 368 to 438 lie on the Cytoplasmic side of the membrane; that stretch reads LPSIYLIFII…PLHDFLCHLP (71 aa). The short motif at 409–419 is the Lysosomal targeting motif element; it reads MEAACISDTLG. Cysteine 435 is subject to Cysteine methyl ester. Cysteine 435 carries the S-farnesyl cysteine lipid modification. The propeptide at 436–438 is removed in mature form; that stretch reads HLP.

It belongs to the battenin family. As to quaternary structure, homooligomer. Interacts with DCTN1, KIF3A, RAB7A and RILP. Interacts with CLN5. Interacts with KCNIP3. In terms of processing, highly glycosylated. Post-translationally, farnesylation is important for trafficking to lysosomes. As to expression, expressed throughout the brain, such as, in the cerebral cortex, hippocampus, cerebellum and several different cerebral nuclei (at protein level). In the cerebral cortex, expressed in all cortical layers. In the hippocampus, expressed in the granule cells in the dentate gyrus and the pyramidal cells of the hippocampus proper. In the cerebellum expressed in the granular and molecular layers, and in the Purkinje cell layer.

It is found in the lysosome membrane. It localises to the late endosome. Its subcellular location is the lysosome. The protein resides in the membrane raft. The protein localises to the golgi apparatus. It is found in the trans-Golgi network. It localises to the synapse. Its subcellular location is the synaptosome. The protein resides in the early endosome membrane. The protein localises to the late endosome membrane. It is found in the cytoplasmic vesicle. It localises to the autophagosome. Functionally, mediates microtubule-dependent, anterograde transport connecting the Golgi network, endosomes, autophagosomes, lysosomes and plasma membrane, and participates in several cellular processes such as regulation of lysosomal pH, lysosome protein degradation, receptor-mediated endocytosis, autophagy, transport of proteins and lipids from the TGN, apoptosis and synaptic transmission. Facilitates the proteins transport from trans-Golgi network (TGN)-to other membrane compartments such as transport of microdomain-associated proteins to the plasma membrane, IGF2R transport to the lysosome where it regulates the CTSD release leading to regulation of CTSD maturation and thereby APP intracellular processing. Moreover regulates CTSD activity in response to osmotic stress. Also binds galactosylceramide and transports it from the trans Golgi to the rafts, which may have immediate and downstream effects on cell survival by modulating ceramide synthesis. At the plasma membrane, regulates actin-dependent events including filopodia formation, cell migration, and pinocytosis through ARF1-CDC42 pathway and also the cytoskeleton organization through interaction with MYH10 and fodrin leading to the regulation of the plasma membrane association of Na+, K+ ATPase complex. Regulates synaptic transmission in the amygdala, hippocampus, and cerebellum through regulation of synaptic vesicles density and their proximity to active zones leading to modulation of short-term plasticity and age-dependent anxious behavior, learning and memory. Regulates autophagic vacuoles (AVs) maturation by modulating the trafficking between endocytic and autophagolysosomal/lysosomal compartments, which involves vesicle fusion leading to regulation of degradation process. Also participates in cellular homeostasis of compounds such as, water, ions, amino acids, proteins and lipids in several tissue namely in brain and kidney through regulation of their transport and synthesis. This Mus musculus (Mouse) protein is Battenin.